Reading from the N-terminus, the 221-residue chain is Sentrin-specific protease 8 (221 aa).

M1 carries the N-acetylmethionine modification. Residues 11–174 (SLLRQSDVSL…MYVICNTEAL (164 aa)) form a protease region. Active-site residues include H102 and D119. Residue C163 is the Nucleophile of the active site.

It belongs to the peptidase C48 family.

In terms of biological role, protease that catalyzes two essential functions in the NEDD8 pathway: processing of full-length NEDD8 to its mature form and deconjugation of NEDD8 from targeted proteins such as cullins or p53. This chain is Sentrin-specific protease 8 (Senp8), found in Mus musculus (Mouse).